A 260-amino-acid polypeptide reads, in one-letter code: 3'-5' ssDNA/RNA exonuclease TatD (260 aa).

A divalent metal cation is bound by residues glutamate 91, histidine 127, and histidine 152.

It belongs to the metallo-dependent hydrolases superfamily. TatD-type hydrolase family. TatD subfamily. Monomer. Mg(2+) serves as cofactor. It depends on Mn(2+) as a cofactor.

It localises to the cytoplasm. 3'-5' exonuclease that prefers single-stranded DNA and RNA. May play a role in the H(2)O(2)-induced DNA damage repair. The polypeptide is 3'-5' ssDNA/RNA exonuclease TatD (Escherichia coli (strain K12)).